A 156-amino-acid chain; its full sequence is Transcriptional repressor NrdR (156 aa).

A zinc finger lies at 3 to 34; the sequence is CPKCNSTHSRVVDSRHADEVNAIRRRRECEEC. Residues 49 to 139 form the ATP-cone domain; sequence LIVVKKDGTR…VYKEFKDVDQ (91 aa).

This sequence belongs to the NrdR family. Requires Zn(2+) as cofactor.

Its function is as follows. Negatively regulates transcription of bacterial ribonucleotide reductase nrd genes and operons by binding to NrdR-boxes. This is Transcriptional repressor NrdR from Staphylococcus saprophyticus subsp. saprophyticus (strain ATCC 15305 / DSM 20229 / NCIMB 8711 / NCTC 7292 / S-41).